The primary structure comprises 257 residues: Hydroxyacylglutathione hydrolase (257 aa).

Residues H54, H56, D58, H59, H113, D137, and H175 each contribute to the Zn(2+) site.

Belongs to the metallo-beta-lactamase superfamily. Glyoxalase II family. In terms of assembly, monomer. Requires Zn(2+) as cofactor.

The enzyme catalyses an S-(2-hydroxyacyl)glutathione + H2O = a 2-hydroxy carboxylate + glutathione + H(+). It participates in secondary metabolite metabolism; methylglyoxal degradation; (R)-lactate from methylglyoxal: step 2/2. Its function is as follows. Thiolesterase that catalyzes the hydrolysis of S-D-lactoyl-glutathione to form glutathione and D-lactic acid. This Rippkaea orientalis (strain PCC 8801 / RF-1) (Cyanothece sp. (strain PCC 8801)) protein is Hydroxyacylglutathione hydrolase.